A 250-amino-acid chain; its full sequence is Serine/arginine-rich splicing factor RS31A (250 aa).

RRM domains are found at residues 2 to 74 (RHVY…WAKD) and 95 to 166 (KTLF…YALR). The interval 170–250 (EREDRYAGSR…SRSPIQRARG (81 aa)) is disordered. Basic residues predominate over residues 177-191 (GSRRRRSPSPVYRRR). Phosphoserine is present on residues serine 183, serine 185, serine 201, serine 218, and serine 243. Over residues 192–230 (PSPDYTRRRSPEYDRYKGPAPYERRKSPDYGRRSSDYGR) the composition is skewed to basic and acidic residues.

This sequence belongs to the splicing factor SR family. RS subfamily. Component of the spliceosome. Interacts with MOS14.

It localises to the nucleus speckle. Its subcellular location is the nucleus. The protein localises to the nucleoplasm. Its function is as follows. Probably involved in intron recognition and spliceosome assembly. The sequence is that of Serine/arginine-rich splicing factor RS31A (RS31A) from Arabidopsis thaliana (Mouse-ear cress).